Consider the following 201-residue polypeptide: Small ribosomal subunit protein uS4 (201 aa).

The tract at residues 1 to 46 (MARYTGPRSRISRRFGEPVMGDSKALQKKNYAPGMHGRNKKRKQSE) is disordered. The S4 RNA-binding domain maps to 92–151 (ARLDNTVYRLGIASSRRAARQLVIHKHIVVNGDVVNIPSYQLKPGDQLGVREKSKSIEAI).

Belongs to the universal ribosomal protein uS4 family. In terms of assembly, part of the 30S ribosomal subunit. Contacts protein S5. The interaction surface between S4 and S5 is involved in control of translational fidelity.

Its function is as follows. One of the primary rRNA binding proteins, it binds directly to 16S rRNA where it nucleates assembly of the body of the 30S subunit. With S5 and S12 plays an important role in translational accuracy. This Cytophaga hutchinsonii (strain ATCC 33406 / DSM 1761 / CIP 103989 / NBRC 15051 / NCIMB 9469 / D465) protein is Small ribosomal subunit protein uS4.